Here is an 81-residue protein sequence, read N- to C-terminus: Apolipoprotein C-I, acidic form (81 aa).

A signal peptide spans 1 to 24; that stretch reads MRLFLSLLVVVLSMVLKGPTPAQG.

The protein belongs to the apolipoprotein C1 family.

The protein localises to the secreted. In Macaca fascicularis (Crab-eating macaque), this protein is Apolipoprotein C-I, acidic form (APOC1A).